The chain runs to 387 residues: Phosphoglycerate kinase (387 aa).

Substrate contacts are provided by residues 21–23, R36, 59–62, R113, and R146; these read DLN and HLGR. ATP is bound by residues K197, E314, and 340-343; that span reads GGDT.

The protein belongs to the phosphoglycerate kinase family. Monomer.

It localises to the cytoplasm. It carries out the reaction (2R)-3-phosphoglycerate + ATP = (2R)-3-phospho-glyceroyl phosphate + ADP. It participates in carbohydrate degradation; glycolysis; pyruvate from D-glyceraldehyde 3-phosphate: step 2/5. The chain is Phosphoglycerate kinase from Aliivibrio salmonicida (strain LFI1238) (Vibrio salmonicida (strain LFI1238)).